Reading from the N-terminus, the 35-residue chain is Sperm protamine alpha isoform 1 (35 aa).

Residues 1–35 are disordered; the sequence is MPRRRRRASRPVRRRRRARRSTAVRRRRRVVRRRR. Ser9 and Ser21 each carry phosphoserine.

In terms of processing, phosphorylated in immature sperm. Dephosphorylated in mature sperm allowing a stronger interaction with DNA. Gonads.

The protein resides in the nucleus. It localises to the chromosome. In terms of biological role, protamines substitute for histones in the chromatin of sperm during the haploid phase of spermatogenesis. They compact sperm DNA into a highly condensed, stable and inactive complex. In Scomber scombrus (Atlantic mackerel), this protein is Sperm protamine alpha isoform 1.